Reading from the N-terminus, the 349-residue chain is UDP-N-acetylenolpyruvoylglucosamine reductase (349 aa).

Positions 25–197 constitute an FAD-binding PCMH-type domain; sequence GIAARARFAA…VAVTFRLPKQ (173 aa). R173 is an active-site residue. Residue S249 is the Proton donor of the active site. E345 is an active-site residue.

Belongs to the MurB family. The cofactor is FAD.

Its subcellular location is the cytoplasm. It catalyses the reaction UDP-N-acetyl-alpha-D-muramate + NADP(+) = UDP-N-acetyl-3-O-(1-carboxyvinyl)-alpha-D-glucosamine + NADPH + H(+). It functions in the pathway cell wall biogenesis; peptidoglycan biosynthesis. Its function is as follows. Cell wall formation. This chain is UDP-N-acetylenolpyruvoylglucosamine reductase, found in Burkholderia orbicola (strain MC0-3).